The chain runs to 286 residues: Transmembrane protein 156 (286 aa).

At methionine 1–threonine 4 the chain is on the cytoplasmic side. Residues alanine 5–phenylalanine 25 form a helical membrane-spanning segment. Topologically, residues lysine 26–threonine 214 are extracellular. 4 N-linked (GlcNAc...) asparagine glycosylation sites follow: asparagine 45, asparagine 54, asparagine 76, and asparagine 142. A helical membrane pass occupies residues tryptophan 215–leucine 235. Residues glutamate 236 to glutamate 286 are Cytoplasmic-facing.

It is found in the membrane. This is Transmembrane protein 156 (Tmem156) from Rattus norvegicus (Rat).